The primary structure comprises 1029 residues: MAPFLASPIRLHPCPLLFSHPHLFGSDYFAFSVKGRGAHLESMRVENKRGNRSWGTDAKRTHPNSIFNQLVRYGYIGTGFPDMNCSLTWSLIGGPSTLSLPSFFPSAHLLLSLALFFFLCIQSNHRMSKSGCERCRGRGFWDTDDQDTYFFKVMIGGFRRQMTIPYKFAENFRDQIQGTIKLKARNGNTCSVLVDKCSNKLVLTKGWAEFANSHDIKMGDFLVFRYTGNSQFEVKIFDPSGCVKAASHNAVNIGQHAQNMQGDPIEILSCSDEHLRAQSLTTERQNQPEKDVIDNCNKKMKTEHASSSEDDQETPTAEVHRMKVEEMVRAIHSNHPVFVAVMKKSNVTRQPCYVAISRKYANEYFPGGDQMLTLQRHGKRWQVKFCISKRKLRMLSKGWRKFTRDNELQHWAPLALFITLFFSPHFRKMKKCGQKMRKLNTRSTARDDQEKYFFKVMIGDFHKRMTIPDKFARHFKGVISKTIKLEPRSGYTFDVQVTKKLNILVLGSGWESFVNAHDLNMGDFLVFKYNGDFLLQVLIFDPSGCEKSTSCSMENAIDHVGQGWKEHNDISTSYHDQPKGNKHWMQKDSSSKGNKIGNTRSSNTPSKFSGCILPRGTCLPVVQEKKMKEKIQAIHSKTPMYGNVMTKCNVSGSPCVLEITQLYDDAYLPFNNGQELMLRHRDKSWKVRFYRFKNKSRKLTQASSLYKMRRPGARCREGHAHFNGNHIDGQYKNFFKVMIGRFRERMIIPNEFLQYFRGKIPRTIKLQLRDGCTYDVQVTKNLGKISLQSGWKAFVTAHDLQMGDFLVFSYDGISKLKVLIFGPSGCEKVHSRSTLKNATHCGEKWEEPLHISSNSHDLPVKSPQNVSKSEKQWDSSEQENDTANIEEVALQGDDLQGHPVLNCILPKHTRLTDMQKQQLESKVGAIHSEIPIYGCILRKSRVHGKSQTVDICREYADVYLPFKELNMTLQRHGKNWEVLCRTKDTRTKRLSTGWSRFAQENNLQVGDICLFELLKKKEYSMNVHIIPKK.

DNA-binding regions (TF-B3) lie at residues 147 to 240 (DTYF…FDPS), 339 to 430 (VAVM…RKMK), and 450 to 543 (EKYF…FDPS). The interval 572-605 (TSYHDQPKGNKHWMQKDSSSKGNKIGNTRSSNTP) is disordered. The span at 591-605 (SKGNKIGNTRSSNTP) shows a compositional bias: polar residues. A DNA-binding region (TF-B3 4) is located at residues 731 to 824 (YKNFFKVMIG…KLKVLIFGPS (94 aa)). The span at 852 to 867 (SSNSHDLPVKSPQNVS) shows a compositional bias: polar residues. Residues 852–882 (SSNSHDLPVKSPQNVSKSEKQWDSSEQENDT) are disordered. The TF-B3 5 DNA-binding region spans 934–1029 (GCILRKSRVH…SMNVHIIPKK (96 aa)).

The protein localises to the nucleus. This chain is Putative B3 domain-containing protein Os03g0621600, found in Oryza sativa subsp. japonica (Rice).